We begin with the raw amino-acid sequence, 139 residues long: Ribonuclease VapC36 (139 aa).

The PINc domain maps to 1-127; that stretch reads MIVDTSAVVA…GNDFPQTDLE (127 aa). Residues Asp4 and Asp100 each contribute to the Mg(2+) site.

Belongs to the PINc/VapC protein family. Mg(2+) is required as a cofactor.

Functionally, toxic component of a type II toxin-antitoxin (TA) system. An RNase. Its cognate antitoxin is VapB36. The polypeptide is Ribonuclease VapC36 (Mycobacterium tuberculosis (strain ATCC 25618 / H37Rv)).